A 708-amino-acid polypeptide reads, in one-letter code: Elongation factor G (708 aa).

One can recognise a tr-type G domain in the interval 8 to 290 (KRYRNIGISA…AVIQYLPAPM (283 aa)). GTP-binding positions include 17 to 24 (AHIDAGKT), 88 to 92 (DTPGH), and 142 to 145 (NKMD).

It belongs to the TRAFAC class translation factor GTPase superfamily. Classic translation factor GTPase family. EF-G/EF-2 subfamily.

The protein resides in the cytoplasm. In terms of biological role, catalyzes the GTP-dependent ribosomal translocation step during translation elongation. During this step, the ribosome changes from the pre-translocational (PRE) to the post-translocational (POST) state as the newly formed A-site-bound peptidyl-tRNA and P-site-bound deacylated tRNA move to the P and E sites, respectively. Catalyzes the coordinated movement of the two tRNA molecules, the mRNA and conformational changes in the ribosome. This chain is Elongation factor G, found in Psychrobacter arcticus (strain DSM 17307 / VKM B-2377 / 273-4).